A 427-amino-acid chain; its full sequence is Serine--tRNA ligase (427 aa).

231–233 (TAE) serves as a coordination point for L-serine. 262–264 (RSE) is an ATP binding site. Glu-285 lines the L-serine pocket. An ATP-binding site is contributed by 349-352 (EISS). Residue Ser-385 participates in L-serine binding.

Belongs to the class-II aminoacyl-tRNA synthetase family. Type-1 seryl-tRNA synthetase subfamily. In terms of assembly, homodimer. The tRNA molecule binds across the dimer.

The protein resides in the cytoplasm. The catalysed reaction is tRNA(Ser) + L-serine + ATP = L-seryl-tRNA(Ser) + AMP + diphosphate + H(+). It carries out the reaction tRNA(Sec) + L-serine + ATP = L-seryl-tRNA(Sec) + AMP + diphosphate + H(+). Its pathway is aminoacyl-tRNA biosynthesis; selenocysteinyl-tRNA(Sec) biosynthesis; L-seryl-tRNA(Sec) from L-serine and tRNA(Sec): step 1/1. Functionally, catalyzes the attachment of serine to tRNA(Ser). Is also able to aminoacylate tRNA(Sec) with serine, to form the misacylated tRNA L-seryl-tRNA(Sec), which will be further converted into selenocysteinyl-tRNA(Sec). The sequence is that of Serine--tRNA ligase from Rhizobium johnstonii (strain DSM 114642 / LMG 32736 / 3841) (Rhizobium leguminosarum bv. viciae).